The sequence spans 144 residues: Maximins 5/H4 type 3 (144 aa).

The first 18 residues, 1–18, serve as a signal peptide directing secretion; that stretch reads MNFKYIVAVSFLIASAYA. Propeptides lie at residues 19 to 43 and 74 to 123; these read RSVQ…REIR and TAED…KEKR. Leu-143 is modified (leucine amide).

It belongs to the bombinin family. Expressed by the skin glands.

It is found in the secreted. In terms of biological role, maximin-5 shows antibacterial activity against both Gram-positive and Gram-negative bacteria. The only exception is the resistance of E.coli. Also shows antimicrobial activity against fungi C.albicans, A.flavus and P.uticale. It has little hemolytic activity. It does not possess a significant cytotoxicity against tumor cell lines. It does not possess a significant anti-HIV activity. Its function is as follows. Maximin-H4 shows antibacterial activity against both Gram-positive and Gram-negative bacteria. It also shows antimicrobial activity against the fungus C.albicans. Shows strong hemolytic activity. The protein is Maximins 5/H4 type 3 of Bombina maxima (Giant fire-bellied toad).